A 524-amino-acid chain; its full sequence is Ribonuclease Y (524 aa).

A helical membrane pass occupies residues 7 to 27 (LGGLLTGIVIAIIASIIASVI). The region spanning 214 to 299 (TVSVVPLPND…EMVEKARKEV (86 aa)) is the KH domain. The HD domain maps to 340 to 433 (VLSHSIEVAR…VQAADSISAA (94 aa)).

It belongs to the RNase Y family.

It is found in the cell membrane. Endoribonuclease that initiates mRNA decay. The chain is Ribonuclease Y from Acetivibrio thermocellus (strain ATCC 27405 / DSM 1237 / JCM 9322 / NBRC 103400 / NCIMB 10682 / NRRL B-4536 / VPI 7372) (Clostridium thermocellum).